Reading from the N-terminus, the 172-residue chain is Transcriptional repressor NrdR (172 aa).

A zinc finger spans residues 3–34 (CPYCRNTDTRVLDSRVADDGGSIRRRRTCSAC). The ATP-cone domain maps to 46–136 (LTVLKRSGAS…VYRAFESADD (91 aa)).

Belongs to the NrdR family. Zn(2+) serves as cofactor.

In terms of biological role, negatively regulates transcription of bacterial ribonucleotide reductase nrd genes and operons by binding to NrdR-boxes. In Nocardioides sp. (strain ATCC BAA-499 / JS614), this protein is Transcriptional repressor NrdR.